Consider the following 312-residue polypeptide: Elongation factor Ts, mitochondrial (312 aa).

Belongs to the EF-Ts family.

It is found in the mitochondrion. Functionally, associates with the EF-Tu.GDP complex and induces the exchange of GDP to GTP. It remains bound to the aminoacyl-tRNA.EF-Tu.GTP complex up to the GTP hydrolysis stage on the ribosome. In Xenopus laevis (African clawed frog), this protein is Elongation factor Ts, mitochondrial (tsfm).